A 426-amino-acid chain; its full sequence is UDP-N-acetylglucosamine 1-carboxyvinyltransferase (426 aa).

Residue 22 to 23 coordinates phosphoenolpyruvate; sequence KN. Arg94 contributes to the UDP-N-acetyl-alpha-D-glucosamine binding site. Cys118 functions as the Proton donor in the catalytic mechanism. Cys118 carries the 2-(S-cysteinyl)pyruvic acid O-phosphothioketal modification. UDP-N-acetyl-alpha-D-glucosamine contacts are provided by residues 123 to 127, Asp309, and Ile331; that span reads RPVDL.

This sequence belongs to the EPSP synthase family. MurA subfamily.

Its subcellular location is the cytoplasm. The enzyme catalyses phosphoenolpyruvate + UDP-N-acetyl-alpha-D-glucosamine = UDP-N-acetyl-3-O-(1-carboxyvinyl)-alpha-D-glucosamine + phosphate. The protein operates within cell wall biogenesis; peptidoglycan biosynthesis. Its function is as follows. Cell wall formation. Adds enolpyruvyl to UDP-N-acetylglucosamine. This chain is UDP-N-acetylglucosamine 1-carboxyvinyltransferase, found in Paracoccus denitrificans (strain Pd 1222).